Here is a 222-residue protein sequence, read N- to C-terminus: UPF0758 protein YicR (222 aa).

An MPN domain is found at 100-222 (PLLSPEMTRE…NVSFAERGWI (123 aa)). Residues histidine 171, histidine 173, and aspartate 184 each coordinate Zn(2+). A JAMM motif motif is present at residues 171–184 (HNHPSGCAEPSKAD).

Belongs to the UPF0758 family. YicR subfamily.

The sequence is that of UPF0758 protein YicR from Shigella boydii serotype 18 (strain CDC 3083-94 / BS512).